The following is a 375-amino-acid chain: MKRDYYEVLGVGKGADADEIKKAYRKLARQYHPDVNKAADAEEKFKEVKEAYDVLSEPQKRAQYDRFGHQDPNQGFGGGGFDASGMGGFGDIFDMFFGGGGRRANPNAPRKGSDLQFGLSIEFTETVFGKETDVEIPKEAECDTCHGSGAKPGTGVETCKTCSGTGQQEVAANTPFGRIVNRRVCTTCEGKGKVFKEKCSSCRGSGRVKVRRKIHLNIPAGVDDGAQLRVTGEGEPGVNGGPPGDLYVVLRVKSHEFFEREGNDIYCEVPLTYAQAALGDEIEVPTVDGRVKLKIPSGTQTETFFRLRGKGVPHLRGNGRGDQHVKVRVITPTKLSDKQKELLRELAELSGEKPGQHGGEDEGFFEKMKRAFRGE.

The region spanning 4-68 (DYYEVLGVGK…QKRAQYDRFG (65 aa)) is the J domain. Residues 129–211 (GKETDVEIPK…CRGSGRVKVR (83 aa)) form a CR-type zinc finger. Zn(2+) contacts are provided by C142, C145, C159, C162, C185, C188, C199, and C202. 4 CXXCXGXG motif repeats span residues 142–149 (CDTCHGSG), 159–166 (CKTCSGTG), 185–192 (CTTCEGKG), and 199–206 (CSSCRGSG). Residues 349–375 (LSGEKPGQHGGEDEGFFEKMKRAFRGE) form a disordered region.

This sequence belongs to the DnaJ family. Homodimer. The cofactor is Zn(2+).

Its subcellular location is the cytoplasm. In terms of biological role, participates actively in the response to hyperosmotic and heat shock by preventing the aggregation of stress-denatured proteins and by disaggregating proteins, also in an autonomous, DnaK-independent fashion. Unfolded proteins bind initially to DnaJ; upon interaction with the DnaJ-bound protein, DnaK hydrolyzes its bound ATP, resulting in the formation of a stable complex. GrpE releases ADP from DnaK; ATP binding to DnaK triggers the release of the substrate protein, thus completing the reaction cycle. Several rounds of ATP-dependent interactions between DnaJ, DnaK and GrpE are required for fully efficient folding. Also involved, together with DnaK and GrpE, in the DNA replication of plasmids through activation of initiation proteins. The polypeptide is Chaperone protein DnaJ (Brevibacillus choshinensis).